The primary structure comprises 247 residues: Carboxy-S-adenosyl-L-methionine synthase (247 aa).

S-adenosyl-L-methionine contacts are provided by residues Tyr39, 64–66, 117–118, Asn132, and Arg199; these read GCS and DI.

Belongs to the class I-like SAM-binding methyltransferase superfamily. Cx-SAM synthase family. In terms of assembly, homodimer.

It carries out the reaction prephenate + S-adenosyl-L-methionine = carboxy-S-adenosyl-L-methionine + 3-phenylpyruvate + H2O. Catalyzes the conversion of S-adenosyl-L-methionine (SAM) to carboxy-S-adenosyl-L-methionine (Cx-SAM). The polypeptide is Carboxy-S-adenosyl-L-methionine synthase (Aeromonas salmonicida (strain A449)).